The primary structure comprises 138 residues: MTLSVRIITPDKIVWDDEAEEIILPSTTGQLGILSGHAPLLTALNIGVVRVRPGKDWQTIAVMGGFAEVENNEVKILVNGAEAGAKIDKDTAQQEWNEAQKRLDEASKSGDRQKQIQAEQAWKRARARFQASGGFVQV.

Positions 89-114 are enriched in basic and acidic residues; that stretch reads KDTAQQEWNEAQKRLDEASKSGDRQK. A disordered region spans residues 89 to 117; sequence KDTAQQEWNEAQKRLDEASKSGDRQKQIQ.

The protein belongs to the ATPase epsilon chain family. As to quaternary structure, F-type ATPases have 2 components, CF(1) - the catalytic core - and CF(0) - the membrane proton channel. CF(1) has five subunits: alpha(3), beta(3), gamma(1), delta(1), epsilon(1). CF(0) has three main subunits: a, b and c.

It localises to the cellular thylakoid membrane. In terms of biological role, produces ATP from ADP in the presence of a proton gradient across the membrane. The polypeptide is ATP synthase epsilon chain (Gloeothece citriformis (strain PCC 7424) (Cyanothece sp. (strain PCC 7424))).